A 789-amino-acid polypeptide reads, in one-letter code: Larval serum protein 1 beta chain (789 aa).

Positions 1–16 (MKIAIALLACLGLAAA) are cleaved as a signal peptide.

It belongs to the hemocyanin family. As to quaternary structure, heterohexamer, composed of three subunits, alpha, beta and gamma. As to expression, larval hemolymph.

Its subcellular location is the secreted. It localises to the extracellular space. Its function is as follows. Larval storage protein (LSP) which may serve as a store of amino acids for synthesis of adult proteins. The chain is Larval serum protein 1 beta chain (Lsp1beta) from Drosophila melanogaster (Fruit fly).